The following is a 373-amino-acid chain: AA9 family lytic polysaccharide monooxygenase A (373 aa).

A signal peptide spans 1-20 (MKSSTFGMLALAAAAKLVSA). H21 serves as a coordination point for Cu(2+). The segment at 36 to 55 (EGNSQSGYIRSPPSNSPITD) is disordered. The cysteines at positions 63 and 183 are disulfide-linked. A Cu(2+)-binding site is contributed by H102. The O2 site is built by H169 and Q178. Y180 is a Cu(2+) binding site. The segment at 234-333 (GASGSSSSSS…NSVPQPSSNA (100 aa)) is disordered. 2 stretches are compositionally biased toward low complexity: residues 235 to 262 (ASGS…APSS) and 270 to 323 (PATS…AAPT). Residues 324–333 (NSVPQPSSNA) show a composition bias toward polar residues. Residues 335–371 (GAVKEWYQCGGLNYSGSTQCEEGLTCKKWNPYYHQCV) enclose the CBM1 domain. N347 is a glycosylation site (N-linked (GlcNAc...) asparagine).

This sequence belongs to the polysaccharide monooxygenase AA9 family. Cu(2+) serves as cofactor.

It is found in the secreted. The catalysed reaction is [(1-&gt;4)-beta-D-glucosyl]n+m + reduced acceptor + O2 = 4-dehydro-beta-D-glucosyl-[(1-&gt;4)-beta-D-glucosyl]n-1 + [(1-&gt;4)-beta-D-glucosyl]m + acceptor + H2O.. In terms of biological role, lytic polysaccharide monooxygenase (LPMO) that depolymerizes crystalline and amorphous polysaccharides via the oxidation of scissile alpha- or beta-(1-4)-glycosidic bonds, yielding exclusively C4 oxidation products. Catalysis by LPMOs requires the reduction of the active-site copper from Cu(II) to Cu(I) by a reducing agent and H(2)O(2) or O(2) as a cosubstrate. In addition to cellulose, also cleaves the beta-(1!4)-glucan backbone of tamarind xyloglucan, but only next to unsubstituted glucosyl units. The sequence is that of AA9 family lytic polysaccharide monooxygenase A from Aspergillus tamarii.